Here is a 379-residue protein sequence, read N- to C-terminus: Pectin lyase A (379 aa).

A signal peptide spans 1 to 20 (MKTTFLVSLATAALSSTAAA). 2 cysteine pairs are disulfide-bonded: C83-C102 and C92-C226. R256 is a catalytic residue. Residues C323 and C331 are joined by a disulfide bond.

The protein belongs to the polysaccharide lyase 1 family.

Its subcellular location is the secreted. It carries out the reaction Eliminative cleavage of (1-&gt;4)-alpha-D-galacturonan methyl ester to give oligosaccharides with 4-deoxy-6-O-methyl-alpha-D-galact-4-enuronosyl groups at their non-reducing ends.. Its function is as follows. Pectinolytic enzymes consist of four classes of enzymes: pectin lyase, polygalacturonase, pectin methylesterase and rhamnogalacturonase. Among pectinolytic enzymes, pectin lyase is the most important in depolymerization of pectin, since it cleaves internal glycosidic bonds of highly methylated pectins. This Emericella nidulans (strain FGSC A4 / ATCC 38163 / CBS 112.46 / NRRL 194 / M139) (Aspergillus nidulans) protein is Pectin lyase A (pelA).